Here is a 252-residue protein sequence, read N- to C-terminus: Imidazole glycerol phosphate synthase subunit HisF (252 aa).

Catalysis depends on residues D11 and D130.

This sequence belongs to the HisA/HisF family. As to quaternary structure, heterodimer of HisH and HisF.

It localises to the cytoplasm. The catalysed reaction is 5-[(5-phospho-1-deoxy-D-ribulos-1-ylimino)methylamino]-1-(5-phospho-beta-D-ribosyl)imidazole-4-carboxamide + L-glutamine = D-erythro-1-(imidazol-4-yl)glycerol 3-phosphate + 5-amino-1-(5-phospho-beta-D-ribosyl)imidazole-4-carboxamide + L-glutamate + H(+). Its pathway is amino-acid biosynthesis; L-histidine biosynthesis; L-histidine from 5-phospho-alpha-D-ribose 1-diphosphate: step 5/9. Its function is as follows. IGPS catalyzes the conversion of PRFAR and glutamine to IGP, AICAR and glutamate. The HisF subunit catalyzes the cyclization activity that produces IGP and AICAR from PRFAR using the ammonia provided by the HisH subunit. This Polynucleobacter necessarius subsp. necessarius (strain STIR1) protein is Imidazole glycerol phosphate synthase subunit HisF.